Here is a 396-residue protein sequence, read N- to C-terminus: Dihydrolipoyllysine-residue acetyltransferase component of pyruvate dehydrogenase complex (396 aa).

Residues 1–69 form the Lipoyl-binding domain; it reads MPDIGLEEVE…KTDALIMRCE (69 aa). Lys35 carries the post-translational modification N6-lipoyllysine. Positions 104-141 constitute a Peripheral subunit-binding (PSBD) domain; the sequence is HATPLIRRLARNLNINLYDVVGTGPKNRILKEDLDLYQ. The active site involves His369.

The protein belongs to the 2-oxoacid dehydrogenase family. Forms a 24-polypeptide structural core with octahedral symmetry. (R)-lipoate serves as cofactor.

The catalysed reaction is N(6)-[(R)-dihydrolipoyl]-L-lysyl-[protein] + acetyl-CoA = N(6)-[(R)-S(8)-acetyldihydrolipoyl]-L-lysyl-[protein] + CoA. The pyruvate dehydrogenase complex catalyzes the overall conversion of pyruvate to acetyl-CoA and CO(2). It contains multiple copies of three enzymatic components: pyruvate dehydrogenase (E1), dihydrolipoamide acetyltransferase (E2) and lipoamide dehydrogenase (E3). The protein is Dihydrolipoyllysine-residue acetyltransferase component of pyruvate dehydrogenase complex (aceF) of Buchnera aphidicola subsp. Acyrthosiphon pisum (strain APS) (Acyrthosiphon pisum symbiotic bacterium).